A 361-amino-acid polypeptide reads, in one-letter code: RNA-binding protein 4 (361 aa).

RRM domains lie at 2-72 and 78-148; these read VKLF…ASKN and TKLH…LSTS. Lysine 79 is covalently cross-linked (Glycyl lysine isopeptide (Lys-Gly) (interchain with G-Cter in SUMO2)). Serine 86 is subject to Phosphoserine. The segment at 160–177 adopts a CCHC-type zinc-finger fold; it reads SGCYRCGKEGHWSKECPI. Residues 196–361 form an interaction with TNPO3 region; the sequence is AVRTPYTMSY…YADRARYSAF (166 aa). A Phosphoserine modification is found at serine 306.

Interacts with TNPO3; the interaction mediates nuclear import of the protein and is disrupted by nuclear Ran bound to GTP. Interacts with EIF4G1 and WT1. Interacts with EIF4A1; the interaction is modulated under stress-induced conditions. Interacts with AGO1. Interacts with AGO2; the interaction occurs under both cell proliferation and differentiation conditions and in an RNA- and phosphorylation-independent manner. Interacts with DDX5; the interaction occurs in an RNA-independent manner. Interacts with RBPMS; the interaction allows cooperative assembly of RNA-bound stable cell-specific alternative splicing regulatory complexes. Post-translationally, phosphorylated. Phosphorylated in vitro on Ser-306 by SRPK1. Phosphorylation on Ser-306 is induced upon cell stress signaling, which alters its subcellular localization and may modulate its activity on IRES-mediated mRNA translation. Phosphorylated. Phosphorylation on Ser-306 is induced upon cell muscle differentiation. As to expression, expressed in the suprachiasmatic nucleus (SCN). Expressed in myocytes; expression gradually increases during muscle cell differentiation (at protein level). Expressed in the suprachiasmatic nucleus (SCN).

The protein localises to the nucleus. Its subcellular location is the nucleolus. It localises to the nucleus speckle. It is found in the cytoplasm. The protein resides in the cytoplasmic granule. RNA-binding factor involved in multiple aspects of cellular processes like alternative splicing of pre-mRNA and translation regulation. Modulates alternative 5'-splice site and exon selection. Acts as a muscle cell differentiation-promoting factor. Activates exon skipping of the PTB pre-mRNA during muscle cell differentiation. Antagonizes the activity of the splicing factor PTBP1 to modulate muscle cell-specific exon selection of alpha tropomyosin. Binds to intronic pyrimidine-rich sequence of the TPM1 and MAPT pre-mRNAs. Required for the translational activation of PER1 mRNA in response to circadian clock. Binds directly to the 3'-UTR of the PER1 mRNA. Exerts a suppressive activity on Cap-dependent translation via binding to CU-rich responsive elements within the 3'UTR of mRNAs, a process increased under stress conditions or during myocytes differentiation. Recruits EIF4A1 to stimulate IRES-dependent translation initiation in respons to cellular stress. Associates to internal ribosome entry segment (IRES) in target mRNA species under stress conditions. Plays a role for miRNA-guided RNA cleavage and translation suppression by promoting association of AGO2-containing miRNPs with their cognate target mRNAs. Associates with miRNAs during muscle cell differentiation. Binds preferentially to 5'-CGCGCG[GCA]-3' motif in vitro. The chain is RNA-binding protein 4 (Rbm4) from Mus musculus (Mouse).